The following is a 360-amino-acid chain: Peptide chain release factor 1 (360 aa).

Position 235 is an N5-methylglutamine (Q235). Basic and acidic residues predominate over residues 285 to 295 (RQAAEQADTRR). The disordered stretch occupies residues 285 to 309 (RQAAEQADTRRNLLGSGDRSDKIRT).

The protein belongs to the prokaryotic/mitochondrial release factor family. Methylated by PrmC. Methylation increases the termination efficiency of RF1.

It is found in the cytoplasm. Peptide chain release factor 1 directs the termination of translation in response to the peptide chain termination codons UAG and UAA. The protein is Peptide chain release factor 1 of Actinobacillus pleuropneumoniae serotype 7 (strain AP76).